We begin with the raw amino-acid sequence, 156 residues long: Small ribosomal subunit protein uS7 (156 aa).

It belongs to the universal ribosomal protein uS7 family. Part of the 30S ribosomal subunit. Contacts proteins S9 and S11.

Functionally, one of the primary rRNA binding proteins, it binds directly to 16S rRNA where it nucleates assembly of the head domain of the 30S subunit. Is located at the subunit interface close to the decoding center, probably blocks exit of the E-site tRNA. This chain is Small ribosomal subunit protein uS7, found in Buchnera aphidicola subsp. Cinara cedri (strain Cc).